We begin with the raw amino-acid sequence, 801 residues long: Cation/H(+) antiporter 7 (801 aa).

13 consecutive transmembrane segments (helical) span residues 58–78, 83–103, 128–148, 154–174, 192–212, 223–243, 254–274, 287–307, 312–332, 340–360, 377–397, 407–427, and 438–458; these read PNLELIILSVFFFWQFFEILF, IPIPKMPSMMLGCVVINLFSY, GAFGFVMYWFLKGVSIDVGML, RAALIGFNTLVIPYISGYILM, EIILLQSLSSFAGVNGLLTDL, VQSCAAVTDLVIFIMVSGTVL, IVIVLVIGFLVYIVWPVMLWI, VYIYLVMATAYFVYMFWLNFF, YGWFIIGLATPAGPPLGSALI, VGVLLPLFGSLSMEQLDISWL, AISVILIVTVVKFVVTAITAF, IVLAMVLSNRSIFELGYLGYI, and FTIAALSVLVSSLLTPIAIEF.

It belongs to the monovalent cation:proton antiporter 2 (CPA2) transporter (TC 2.A.37) family. CHX (TC 2.A.37.4) subfamily. As to expression, expressed in pollen.

The protein localises to the membrane. In terms of biological role, may operate as a cation/H(+) antiporter. The protein is Cation/H(+) antiporter 7 (CHX7) of Arabidopsis thaliana (Mouse-ear cress).